The chain runs to 562 residues: MNVFGKKEEKQEKVYSLQNGFPYSHHPYASQYSRPDGPILLQDFHLLENIASFDRERVPERVVHAKGGGCRLEFELTDSLSDITYAAPYQNVGYKCPGLVRFSTVGGESGTPDTARDPRGVSFKFYTEWGNHDWVFNNTPVFFLRDAIKFPVFIHSQKRDPQSHLNQFQDTTIYWDYLTLNPESIHQITYMFGDRGTPASWASMNAYSGHSFIMVNKEGKDTYVQFHVLSDTGFETLTGDKAAELSGSHPDYNQAKLFTQLQNGEKPKFNCYVQTMTPEQATKFRYSVNDLTKIWPHKEFPLRKFGTITLTENVDNYFQEIEQVAFSPTNTCIPGIKPSNDSVLQARLFSYPDTQRHRLGANYQQLPVNRPRNLGCPYSKGDSQYTAEQCPFKAVNFQRDGPMSYYNFGPEPNYISSLPNQTLKFKNEDNDEVSDKFKGIVLDEVTEVSVRKQEQDQIRNEHIVDAKINQYYYVYGISPLDFEQPRALYEKVYNDEQKKLFVHNVVCHACKIKDPKVKKRVTQYFGLLNEDLGKVIAECLGVPWEPVDLEGYAKTWSIASAN.

Catalysis depends on residues His-64 and Asn-137. Heme is bound at residue Tyr-351.

This sequence belongs to the catalase family. In terms of assembly, homotetramer. Requires heme as cofactor.

The protein resides in the cytoplasm. It catalyses the reaction 2 H2O2 = O2 + 2 H2O. Its function is as follows. Occurs in almost all aerobically respiring organisms and serves to protect cells from the toxic effects of hydrogen peroxide. The protein is Catalase T (CTT1) of Saccharomyces cerevisiae (strain ATCC 204508 / S288c) (Baker's yeast).